The sequence spans 702 residues: Kinesin-like protein KIF3A (702 aa).

Positions 14–345 constitute a Kinesin motor domain; it reads NVKVVVRCRP…LRYANRAKNI (332 aa). ATP is bound at residue 100-107; it reads GQTGTGKT. A coiled-coil region spans residues 355 to 593; it reads PKDALLRQFQ…LSRELRLQML (239 aa). Disordered stretches follow at residues 372–424 and 667–702; these read KKLE…KMIE and LMKLERPRTSKGKARPKTGRRKRSAKPETVIDSLLQ. Over residues 376–400 the composition is skewed to acidic residues; that stretch reads EGEEISGSDISGSEEDDDEEGEVGE. Over residues 410 to 424 the composition is skewed to basic and acidic residues; it reads DQAGKKKVSPDKMIE. The tract at residues 600-702 is globular; it reads PRDYQEMIEN…PETVIDSLLQ (103 aa). Positions 675-690 are enriched in basic residues; it reads TSKGKARPKTGRRKRS. S690 bears the Phosphoserine mark.

It belongs to the TRAFAC class myosin-kinesin ATPase superfamily. Kinesin family. Kinesin II subfamily. As to quaternary structure, heterodimer of KIF3A and KIF3B. Interacts with CIMAP3. Interacts with CLN3. Interacts with DCTN1. Interacts with FLCN. Interacts with AP3B1.

The protein localises to the cytoplasm. The protein resides in the cytoskeleton. It localises to the cell projection. Its subcellular location is the cilium. It is found in the microtubule organizing center. The protein localises to the centrosome. The protein resides in the centriole. In terms of biological role, microtubule-based anterograde translocator for membranous organelles. Plus end-directed microtubule sliding activity in vitro. Plays a role in primary cilia formation. Plays a role in centriole cohesion and subdistal appendage organization and function. Regulates the formation of the subdistal appendage via recruitment of DCTN1 to the centriole. Also required for ciliary basal feet formation and microtubule anchoring to mother centriole. In Macaca fascicularis (Crab-eating macaque), this protein is Kinesin-like protein KIF3A (KIF3A).